The chain runs to 611 residues: Fatty acid photodecarboxylase, chloroplastic (611 aa).

The interval 1–22 (MMLGPKTVTRGATKGAAPRSMA) is disordered. Residues 1–36 (MMLGPKTVTRGATKGAAPRSMAARRVGGARRLSVRA) constitute a chloroplast transit peptide. Residues 55-56 (TA), glutamate 76, methionine 125, serine 129, and 133-136 (NATL) each bind FAD. Positions 392, 412, 427, and 447 each coordinate hexadecanoate. Glycine 582 serves as a coordination point for FAD.

The protein belongs to the GMC oxidoreductase family. Requires FAD as cofactor.

Its subcellular location is the plastid. It is found in the chloroplast. It carries out the reaction a long-chain fatty acid + hnu + H(+) = a long-chain alkane + CO2. The catalysed reaction is hnu + hexadecanoate + H(+) = pentadecane + CO2. Activated by blue light and repressed by red light. Catalyzes the decarboxylation of free fatty acids to n-alkanes or n-alkenes in response to blue light. Substrate preference is toward fatty acids with C17 or C18 chains. Saturated fatty acids are converted to alkanes, not alkenes. The decarboxylation is initiated through electron abstraction from the fatty acid by the photo-excited FAD. In Chlamydomonas reinhardtii (Chlamydomonas smithii), this protein is Fatty acid photodecarboxylase, chloroplastic.